A 1301-amino-acid polypeptide reads, in one-letter code: DNA-directed RNA polymerase subunit beta (1301 aa).

The protein belongs to the RNA polymerase beta chain family. As to quaternary structure, the RNAP catalytic core consists of 2 alpha, 1 beta, 1 beta' and 1 omega subunit. When a sigma factor is associated with the core the holoenzyme is formed, which can initiate transcription.

The catalysed reaction is RNA(n) + a ribonucleoside 5'-triphosphate = RNA(n+1) + diphosphate. Functionally, DNA-dependent RNA polymerase catalyzes the transcription of DNA into RNA using the four ribonucleoside triphosphates as substrates. This Chlorobium luteolum (strain DSM 273 / BCRC 81028 / 2530) (Pelodictyon luteolum) protein is DNA-directed RNA polymerase subunit beta.